A 354-amino-acid chain; its full sequence is Magnesium-chelatase subunit ChlI (354 aa).

47–54 (GDRGTGKS) serves as a coordination point for ATP. A disulfide bridge links Cys-282 with Cys-324.

The protein belongs to the Mg-chelatase subunits D/I family. As to quaternary structure, the magnesium chelatase complex is a heterotrimer consisting of subunits CHLI, CHLD and CHLH.

It localises to the plastid. It is found in the chloroplast. The catalysed reaction is protoporphyrin IX + Mg(2+) + ATP + H2O = Mg-protoporphyrin IX + ADP + phosphate + 3 H(+). It participates in porphyrin-containing compound metabolism; chlorophyll biosynthesis. Its activity is regulated as follows. Redox regulation; active in reducing conditions, inactive in oxidizing conditions. Thioredoxins f and m mediate the reversible reductive activation of oxidized CHLI. Functionally, involved in chlorophyll biosynthesis. Catalyzes the insertion of magnesium ion into protoporphyrin IX to yield Mg-protoporphyrin IX. The magnesium-chelatase is a complex of three subunits, CHLI, CHLD and CHLH. The reaction takes place in two steps, with an ATP-dependent activation followed by an ATP-dependent chelation step. The chain is Magnesium-chelatase subunit ChlI (chlI) from Chlorella vulgaris (Green alga).